The sequence spans 335 residues: Nucleoid-associated protein PputW619_4243 (335 aa).

This sequence belongs to the YejK family.

It is found in the cytoplasm. Its subcellular location is the nucleoid. The chain is Nucleoid-associated protein PputW619_4243 from Pseudomonas putida (strain W619).